Consider the following 185-residue polypeptide: MIKQVEKNAKQKMEKVLEATKHDLNTVRTGRARPSLVENIMVDYYGTQTPIQQMAKVVAPEARQLVIEPWDKSVIESIEKAILKSNLGLNPSNDGNVIRINIPQLTEERRKELVKVAHEKAEKGRIAIRNIRREANDELKEMEKNSEISEDNYHRGLDMIQELTDTYIDKIDKMLEDKEQDIMEV.

The protein belongs to the RRF family.

It is found in the cytoplasm. In terms of biological role, responsible for the release of ribosomes from messenger RNA at the termination of protein biosynthesis. May increase the efficiency of translation by recycling ribosomes from one round of translation to another. The sequence is that of Ribosome-recycling factor from Halothermothrix orenii (strain H 168 / OCM 544 / DSM 9562).